Consider the following 293-residue polypeptide: Nucleotide-binding protein Csac_1160 (293 aa).

Residue 11–18 (GMSGAGKS) coordinates ATP. 62-65 (DIRG) contacts GTP.

It belongs to the RapZ-like family.

Displays ATPase and GTPase activities. This chain is Nucleotide-binding protein Csac_1160, found in Caldicellulosiruptor saccharolyticus (strain ATCC 43494 / DSM 8903 / Tp8T 6331).